The primary structure comprises 273 residues: Dermonecrotic toxin LdSicTox-alphaIB3aiii (273 aa).

Histidine 5 is a catalytic residue. Mg(2+) is bound by residues glutamate 25 and aspartate 27. Histidine 41 functions as the Nucleophile in the catalytic mechanism. 2 disulfide bridges follow: cysteine 45-cysteine 51 and cysteine 47-cysteine 190. Aspartate 85 serves as a coordination point for Mg(2+).

Belongs to the arthropod phospholipase D family. Class II subfamily. Mg(2+) serves as cofactor. In terms of tissue distribution, expressed by the venom gland.

The protein resides in the secreted. The enzyme catalyses an N-(acyl)-sphingosylphosphocholine = an N-(acyl)-sphingosyl-1,3-cyclic phosphate + choline. It catalyses the reaction an N-(acyl)-sphingosylphosphoethanolamine = an N-(acyl)-sphingosyl-1,3-cyclic phosphate + ethanolamine. The catalysed reaction is a 1-acyl-sn-glycero-3-phosphocholine = a 1-acyl-sn-glycero-2,3-cyclic phosphate + choline. It carries out the reaction a 1-acyl-sn-glycero-3-phosphoethanolamine = a 1-acyl-sn-glycero-2,3-cyclic phosphate + ethanolamine. Its function is as follows. Dermonecrotic toxins cleave the phosphodiester linkage between the phosphate and headgroup of certain phospholipids (sphingolipid and lysolipid substrates), forming an alcohol (often choline) and a cyclic phosphate. This toxin acts on sphingomyelin (SM). It may also act on ceramide phosphoethanolamine (CPE), lysophosphatidylcholine (LPC) and lysophosphatidylethanolamine (LPE), but not on lysophosphatidylserine (LPS), and lysophosphatidylglycerol (LPG). It acts by transphosphatidylation, releasing exclusively cyclic phosphate products as second products. Induces dermonecrosis, hemolysis, increased vascular permeability, edema, inflammatory response, and platelet aggregation. The protein is Dermonecrotic toxin LdSicTox-alphaIB3aiii of Loxosceles deserta (Desert recluse spider).